The sequence spans 348 residues: Fasciculation and elongation protein zeta-2 (348 aa).

The interval tyrosine 11–glycine 40 is disordered. A phosphoserine mark is found at serine 130, serine 171, and serine 190. A coiled-coil region spans residues glutamate 206–serine 280. The tract at residues glutamine 265–threonine 296 is disordered.

Belongs to the zygin family. Homodimer; disulfide-linked. May form heterodimers with FEZ1. Interacts with synaptotagmin.

Involved in axonal outgrowth and fasciculation. The protein is Fasciculation and elongation protein zeta-2 (Fez2) of Mus musculus (Mouse).